The chain runs to 405 residues: MQNNSFLARLVRGNLVLQILAGILLGAAMATFSPEYAQKVGLIGNLFVGALKAVAPVLVFILVASSIANQKKNQHTYMRPIVVLYLFGTFSAALTAVILSFLFPTTLVLATGAEGATPPQGIAEVLNTLLFKLVDNPVSALMNANYIGILAWGVGLGLALHHSSSTTKAVFEDLSHGISQIVRFIIRLAPFGIFGLVASTFATTGFDALAGYAQLLAVLLGAMAFIALVVNPMIVYYKIRRNPFPLVLQCLRESGVTAFFTRSSAANIPVNMALCEKLKLDEDTYSVSIPLGATINMAGAAITITVLTLAAVHTMGIEVDLMTALLLSVVAAVSACGASGVAGGSLLLIPLACGLFGISNDIAMQVVAVGFIIGVIQDSAETALNSSTDVLFTAAVCQAEHEKRA.

The next 9 membrane-spanning stretches (helical) occupy residues 13-33, 43-63, 81-101, 140-160, 191-211, 215-235, 297-317, 338-358, and 362-382; these read GNLV…ATFS, IGNL…FILV, IVVL…ILSF, ALMN…GLAL, FGIF…ALAG, LLAV…PMIV, MAGA…TMGI, ASGV…LFGI, and IAMQ…SAET.

The protein belongs to the dicarboxylate/amino acid:cation symporter (DAACS) (TC 2.A.23) family.

It is found in the cell inner membrane. It catalyses the reaction L-serine(in) + Na(+)(in) = L-serine(out) + Na(+)(out). It carries out the reaction L-threonine(in) + Na(+)(in) = L-threonine(out) + Na(+)(out). Its function is as follows. Involved in the import of serine and threonine into the cell, with the concomitant import of sodium (symport system). The polypeptide is Serine/threonine transporter SstT (Vibrio cholerae serotype O1 (strain ATCC 39315 / El Tor Inaba N16961)).